The sequence spans 211 residues: Redox-sensing transcriptional repressor Rex (211 aa).

The H-T-H motif DNA-binding region spans 17–56 (LYYRFVSILKGKGIDRVNSKTISEALQIDSATIRRDFSYF). Residue 91–96 (GIGNLG) coordinates NAD(+).

Belongs to the transcriptional regulatory Rex family. Homodimer.

It is found in the cytoplasm. Its function is as follows. Modulates transcription in response to changes in cellular NADH/NAD(+) redox state. This chain is Redox-sensing transcriptional repressor Rex, found in Staphylococcus epidermidis (strain ATCC 35984 / DSM 28319 / BCRC 17069 / CCUG 31568 / BM 3577 / RP62A).